Here is a 126-residue protein sequence, read N- to C-terminus: Large ribosomal subunit protein bL21 (126 aa).

The interval K105–E126 is disordered.

In terms of assembly, contacts protein L20. Part of the 50S ribosomal subunit.

In terms of biological role, this protein binds to 23S rRNA in the presence of protein L20. The polypeptide is Large ribosomal subunit protein bL21 (Rhodopseudomonas palustris (strain ATCC BAA-98 / CGA009)).